A 548-amino-acid polypeptide reads, in one-letter code: Glucose-6-phosphate isomerase (548 aa).

The Proton donor role is filled by E355. Residues H386 and K514 contribute to the active site.

Belongs to the GPI family.

The protein localises to the cytoplasm. It carries out the reaction alpha-D-glucose 6-phosphate = beta-D-fructose 6-phosphate. It functions in the pathway carbohydrate biosynthesis; gluconeogenesis. The protein operates within carbohydrate degradation; glycolysis; D-glyceraldehyde 3-phosphate and glycerone phosphate from D-glucose: step 2/4. Catalyzes the reversible isomerization of glucose-6-phosphate to fructose-6-phosphate. The polypeptide is Glucose-6-phosphate isomerase (Hamiltonella defensa subsp. Acyrthosiphon pisum (strain 5AT)).